The chain runs to 86 residues: Bacteriocin thailandicin (86 aa).

The cyclopeptide (Leu-Trp) cross-link spans 23–86 (LTANLGISSY…KYGAKYSAAW (64 aa)).

It is found in the secreted. In terms of biological role, cyclopeptide antibiotic with bacteriolytic activity against the Gram-positive bacteria S.aureus and S.thermophilus, and lower activity against the Gram-negative bacteria E.coli and P.aeruginosa. The polypeptide is Bacteriocin thailandicin (Enterococcus thailandicus).